The primary structure comprises 277 residues: Large ribosomal subunit protein uL2 (277 aa).

The tract at residues 225 to 277 (MNPVDHPHGGGEGKTSGGRNSVTPWGVPTKGKKTRKRGKHSDKYIKVSSVRKR) is disordered. A compositionally biased stretch (basic residues) spans 254 to 264 (KGKKTRKRGKH).

The protein belongs to the universal ribosomal protein uL2 family. Part of the 50S ribosomal subunit. Forms a bridge to the 30S subunit in the 70S ribosome.

One of the primary rRNA binding proteins. Required for association of the 30S and 50S subunits to form the 70S ribosome, for tRNA binding and peptide bond formation. It has been suggested to have peptidyltransferase activity; this is somewhat controversial. Makes several contacts with the 16S rRNA in the 70S ribosome. In Anaplasma marginale (strain Florida), this protein is Large ribosomal subunit protein uL2.